Consider the following 1354-residue polypeptide: Tensin homolog (1354 aa).

In terms of domain architecture, Phosphatase tensin-type spans 38-207 (MKDRKEGVQV…GYFSSLLSGR (170 aa)). The Phosphocysteine intermediate role is filled by Cys144. The C2 tensin-type domain occupies 212-337 (SDPLYLHNII…VTVELVVSHT (126 aa)). Disordered regions lie at residues 380–442 (EYSE…DVVP), 597–616 (STLQRRPKPPARSGSYRTLN), 638–660 (SNTAPLPPPRRQEQHAGTRSVQL), 692–720 (DVRGGQQQQQEQHNASNDFNFSNTLNNTP), 734–754 (SVTTPRNHHFSTPSREQEADA), 794–879 (AANN…DRQR), and 1015–1035 (NGERGGSGHAAGGGGGGHNGY). Residues 391 to 401 (SSKSANPINNN) show a composition bias toward polar residues. Pro residues predominate over residues 408–417 (VGPPVPPKPS). 3 stretches are compositionally biased toward polar residues: residues 704 to 720 (HNASNDFNFSNTLNNTP), 734 to 747 (SVTTPRNHHFSTPS), and 794 to 804 (AANNDENQHNL). Over residues 821-843 (AEFRREEERLRNTRSPYGEERWR) the composition is skewed to basic and acidic residues. Over residues 1017–1033 (ERGGSGHAAGGGGGGHN) the composition is skewed to gly residues. The region spanning 1083–1187 (WYKPTISREQ…ALPTKLVLPD (105 aa)) is the SH2 domain. One can recognise a PTB domain in the interval 1209-1353 (ACNVVYVGSV…NKVMLAQKNR (145 aa)).

This sequence belongs to the PTEN phosphatase protein family. In terms of assembly, may interact (via SH2 domain) with receptor svh-2 (when tyrosine-phosphorylated). May interact (via C-terminus) with integrin pat-3. As to expression, expressed in ventral motor neurons, including ventral and dorsal D-type neurons, and in a subset of cells in the head.

The protein resides in the cell projection. The protein localises to the axon. It carries out the reaction O-phospho-L-tyrosyl-[protein] + H2O = L-tyrosyl-[protein] + phosphate. Functionally, probable phosphatase which regulates axon regeneration after injury by linking the svh-2 and integrin signaling pathways. Not involved in axon regeneration after injury. This is Tensin homolog from Caenorhabditis elegans.